The sequence spans 430 residues: Phosphomethylpyrimidine synthase (430 aa).

Substrate-binding positions include N67, M96, Y125, H161, S183–G185, D224–R227, and E263. Position 267 (H267) interacts with Zn(2+). Y290 contacts substrate. Residue H331 participates in Zn(2+) binding. [4Fe-4S] cluster-binding residues include C406, C409, and C413.

It belongs to the ThiC family. As to quaternary structure, homodimer. Requires [4Fe-4S] cluster as cofactor.

It carries out the reaction 5-amino-1-(5-phospho-beta-D-ribosyl)imidazole + S-adenosyl-L-methionine = 4-amino-2-methyl-5-(phosphooxymethyl)pyrimidine + CO + 5'-deoxyadenosine + formate + L-methionine + 3 H(+). It participates in cofactor biosynthesis; thiamine diphosphate biosynthesis. Catalyzes the synthesis of the hydroxymethylpyrimidine phosphate (HMP-P) moiety of thiamine from aminoimidazole ribotide (AIR) in a radical S-adenosyl-L-methionine (SAM)-dependent reaction. This chain is Phosphomethylpyrimidine synthase, found in Campylobacter jejuni subsp. jejuni serotype O:2 (strain ATCC 700819 / NCTC 11168).